Here is a 275-residue protein sequence, read N- to C-terminus: 4-diphosphocytidyl-2-C-methyl-D-erythritol kinase (275 aa).

K15 is an active-site residue. 97–107 is a binding site for ATP; it reads PMGSGLGGGSS. Residue D137 is part of the active site.

It belongs to the GHMP kinase family. IspE subfamily.

The catalysed reaction is 4-CDP-2-C-methyl-D-erythritol + ATP = 4-CDP-2-C-methyl-D-erythritol 2-phosphate + ADP + H(+). Its pathway is isoprenoid biosynthesis; isopentenyl diphosphate biosynthesis via DXP pathway; isopentenyl diphosphate from 1-deoxy-D-xylulose 5-phosphate: step 3/6. In terms of biological role, catalyzes the phosphorylation of the position 2 hydroxy group of 4-diphosphocytidyl-2C-methyl-D-erythritol. The chain is 4-diphosphocytidyl-2-C-methyl-D-erythritol kinase from Pseudothermotoga lettingae (strain ATCC BAA-301 / DSM 14385 / NBRC 107922 / TMO) (Thermotoga lettingae).